A 1306-amino-acid polypeptide reads, in one-letter code: Clustered mitochondria protein homolog (1306 aa).

The segment covering 1 to 11 (MAVNNEVNNAA) has biased composition (low complexity). A disordered region spans residues 1-47 (MAVNNEVNNAASETPTDVSSSSQKLATEETALTNGADHEEEDGGEAG). Polar residues predominate over residues 12 to 33 (SETPTDVSSSSQKLATEETALT). The region spanning 336–580 (DITRTQENYL…RVTPLDITWM (245 aa)) is the Clu domain. 2 disordered regions span residues 630–689 (ERKR…QERI) and 912–956 (KQSQ…SPAA). The span at 656 to 689 (EPAKSEEPTENGELAKKSESDEAAEPSKPDQERI) shows a compositional bias: basic and acidic residues. TPR repeat units lie at residues 1032 to 1065 (ARVY…SERT), 1074 to 1107 (LLNY…WKVV), and 1116 to 1149 (ITTI…CEEV). Residues 1275 to 1306 (FIEGSDQSNQNKKRPGRSNPKRRGGAAATAGK) are disordered. Residues 1285 to 1298 (NKKRPGRSNPKRRG) show a composition bias toward basic residues.

This sequence belongs to the CLU family. In terms of assembly, may associate with the eukaryotic translation initiation factor 3 (eIF-3) complex.

It is found in the cytoplasm. Its function is as follows. mRNA-binding protein involved in proper cytoplasmic distribution of mitochondria. In Botryotinia fuckeliana (strain B05.10) (Noble rot fungus), this protein is Clustered mitochondria protein homolog.